The chain runs to 224 residues: Magnesium-protoporphyrin O-methyltransferase (224 aa).

This sequence belongs to the class I-like SAM-binding methyltransferase superfamily. Magnesium protoporphyrin O-methyltransferase family.

The catalysed reaction is Mg-protoporphyrin IX + S-adenosyl-L-methionine = Mg-protoporphyrin IX 13-monomethyl ester + S-adenosyl-L-homocysteine. Its pathway is porphyrin-containing compound metabolism; bacteriochlorophyll biosynthesis (light-independent). Its function is as follows. Converts Mg-protoporphyrin IX to Mg-protoporphyrin IX methylester using S-adenosyl-L-methionine as a cofactor. The polypeptide is Magnesium-protoporphyrin O-methyltransferase (bchM) (Rhodobacter capsulatus (Rhodopseudomonas capsulata)).